Consider the following 198-residue polypeptide: Recombination protein RecR (198 aa).

The C4-type zinc-finger motif lies at 57–72 (CSVCGHITENDPCYIC). The Toprim domain maps to 80-175 (SVICVVEDDK…KVTRLAQGLS (96 aa)).

Belongs to the RecR family.

May play a role in DNA repair. It seems to be involved in an RecBC-independent recombinational process of DNA repair. It may act with RecF and RecO. This chain is Recombination protein RecR, found in Staphylococcus epidermidis (strain ATCC 35984 / DSM 28319 / BCRC 17069 / CCUG 31568 / BM 3577 / RP62A).